The following is a 624-amino-acid chain: Laccase-1 (624 aa).

An N-terminal signal peptide occupies residues 1–20 (MRGVVKLFFLSCSLVSLVSS). Plastocyanin-like domains follow at residues 69-183 (TKAL…HSPN) and 195-355 (DRIV…VVRY). His-117, His-119, His-162, and His-164 together coordinate Cu cation. The cysteines at positions 138 and 578 are disulfide-linked. Asn-242, Asn-320, and Asn-430 each carry an N-linked (GlcNAc...) asparagine glycan. The Plastocyanin-like 3 domain occupies 469 to 562 (IIINNLDGVI…GKLAVVVIQP (94 aa)). Cu cation-binding residues include His-480, His-483, and His-485. Residue Asn-503 is glycosylated (N-linked (GlcNAc...) asparagine). Positions 543, 544, 545, and 549 each coordinate Cu cation. Residues 582–603 (DPNAFGPARRSPSPSIQSSKTS) form a disordered region. A compositionally biased stretch (low complexity) spans 592 to 603 (SPSPSIQSSKTS).

Belongs to the multicopper oxidase family. It depends on Cu cation as a cofactor.

It localises to the secreted. The protein resides in the cell wall. It catalyses the reaction 4 hydroquinone + O2 = 4 benzosemiquinone + 2 H2O. Its function is as follows. Laccase that catalyzes the oxidation of certain aromatic compounds, including L-dopa, to quinones, which then polymerize to melanin. Able to oxidize a wide variety of aromatic diphenol and diamino groups in the ortho, meta, and para positions but not monophenolic groups such as in phenol, tyramine, or tyrosine. Plays an important role in virulence. Plays a role in dissemination to extrapulmonary sites but is not involved in pulmonary growth or in elicitation of cellular immune responses in the lung. In Cryptococcus neoformans var. grubii serotype A (strain H99 / ATCC 208821 / CBS 10515 / FGSC 9487) (Filobasidiella neoformans var. grubii), this protein is Laccase-1 (LAC1).